The primary structure comprises 1500 residues: Myosin-8 (1500 aa).

The region spanning 8–57 (AVGSHVWVEDPDEAWLDGEVVEINGDQIKVLCASGKQVVVKDSNIYPKDV) is the Myosin N-terminal SH3-like domain. Residues 62–732 (SGVEDMTRLA…QMADLDTRRT (671 aa)) form the Myosin motor domain. ATP contacts are provided by residues 156-163 (GESGAGKT) and 210-218 (NNNSSRFGK). Actin-binding stretches follow at residues 496–530 (LIEKKPGGIIALLDEACMFPRSTHETFAQKLYQTY), 532–555 (NHKRFTKPKLARSDFTICHYAGDV), 590–613 (FPPVSDDSKQSKFSSIGTRFKQQL), and 613–635 (LVSLLEILNTTEPHYIRCIKPNN). 6 consecutive IQ domains span residues 735 to 764 (LGRSASIIQRKVRSYLAQKTFIQLRISATQ), 758 to 787 (LRISATQIQAVCRGYLARSIYEGMRREAAA), 783 to 812 (REAAALKIQRDLRKFLARKAYTELFSATIL), 806 to 835 (LFSATILIQAGMRGMVSRKELCLRRQTKAA), 831 to 860 (QTKAATIIQTRCRVYLARLHYRKLKKAAIT), and 854 to 883 (LKKAAITTQCAWRGKVARKELKNLKMAARE). A coiled-coil region spans residues 884–1049 (TGALQEAKNK…TEKQIMLQQT (166 aa)). The Dilute domain maps to 1146-1447 (DRLIEMIGSA…ISSMRALMTE (302 aa)).

This sequence belongs to the TRAFAC class myosin-kinesin ATPase superfamily. Myosin family. Plant myosin class XI subfamily. Homodimer.

The protein localises to the cytoplasm. Myosin heavy chain that is required for the cell cycle-regulated transport of various organelles and proteins for their segregation. Functions by binding with its tail domain to receptor proteins on organelles and exerting force with its N-terminal motor domain against actin filaments, thereby transporting its cargo along polarized actin cables. This is Myosin-8 (XI-B) from Arabidopsis thaliana (Mouse-ear cress).